Reading from the N-terminus, the 234-residue chain is 1-(5-phosphoribosyl)-5-[(5-phosphoribosylamino)methylideneamino] imidazole-4-carboxamide isomerase (234 aa).

D8 serves as the catalytic Proton acceptor. D128 functions as the Proton donor in the catalytic mechanism.

Belongs to the HisA/HisF family.

It localises to the cytoplasm. It catalyses the reaction 1-(5-phospho-beta-D-ribosyl)-5-[(5-phospho-beta-D-ribosylamino)methylideneamino]imidazole-4-carboxamide = 5-[(5-phospho-1-deoxy-D-ribulos-1-ylimino)methylamino]-1-(5-phospho-beta-D-ribosyl)imidazole-4-carboxamide. It functions in the pathway amino-acid biosynthesis; L-histidine biosynthesis; L-histidine from 5-phospho-alpha-D-ribose 1-diphosphate: step 4/9. The protein is 1-(5-phosphoribosyl)-5-[(5-phosphoribosylamino)methylideneamino] imidazole-4-carboxamide isomerase of Cenarchaeum symbiosum (strain A).